Reading from the N-terminus, the 210-residue chain is Amelogenin, X isoform (210 aa).

The signal sequence occupies residues 1–16; the sequence is MGTWILFACLLGAAFA. Residue S32 is modified to Phosphoserine. 2 stretches are compositionally biased toward low complexity: residues 109–119 and 136–169; these read VAPQQPMMPVP and PSAQ…HPMQ. Residues 109–187 are disordered; it reads VAPQQPMMPV…PPLFSMQPLS (79 aa). Positions 170-179 are enriched in pro residues; sequence PLAPQPPLPP.

This sequence belongs to the amelogenin family. Interacts with KRT5. Post-translationally, several forms are produced by C-terminal processing. In terms of processing, phosphorylated by FAM20C in vitro.

It localises to the secreted. Its subcellular location is the extracellular space. It is found in the extracellular matrix. Plays a role in the biomineralization of teeth. Seems to regulate the formation of crystallites during the secretory stage of tooth enamel development. Thought to play a major role in the structural organization and mineralization of developing enamel. The chain is Amelogenin, X isoform (Amelx) from Mus musculus (Mouse).